We begin with the raw amino-acid sequence, 412 residues long: Probable cystathionine gamma-synthase 2 (412 aa).

Tyr-76, Arg-78, Gly-106, Met-107, Tyr-131, Ser-226, and Thr-228 together coordinate pyridoxal 5'-phosphate. Lys-229 is modified (N6-(pyridoxal phosphate)lysine).

The protein belongs to the trans-sulfuration enzymes family. The cofactor is pyridoxal 5'-phosphate.

It catalyses the reaction O-phospho-L-homoserine + L-cysteine = L,L-cystathionine + phosphate. The catalysed reaction is O-succinyl-L-homoserine + L-cysteine = L,L-cystathionine + succinate + H(+). The protein operates within amino-acid biosynthesis; L-methionine biosynthesis via de novo pathway; L-cystathionine from O-succinyl-L-homoserine: step 1/1. Catalyzes the first committed step of methionine (Met) biosynthesis. Catalyzes the formation of L-cystathionine from homoserine esters and L-cysteine, via a gamma-replacement reaction. The protein is Probable cystathionine gamma-synthase 2 of Arabidopsis thaliana (Mouse-ear cress).